Here is a 296-residue protein sequence, read N- to C-terminus: NAD kinase (296 aa).

Residue aspartate 74 is the Proton acceptor of the active site. NAD(+)-binding positions include aspartate 74–glycine 75, asparagine 148–aspartate 149, arginine 176, aspartate 178, and threonine 189–serine 194.

The protein belongs to the NAD kinase family. Requires a divalent metal cation as cofactor.

The protein resides in the cytoplasm. It catalyses the reaction NAD(+) + ATP = ADP + NADP(+) + H(+). Involved in the regulation of the intracellular balance of NAD and NADP, and is a key enzyme in the biosynthesis of NADP. Catalyzes specifically the phosphorylation on 2'-hydroxyl of the adenosine moiety of NAD to yield NADP. The chain is NAD kinase from Nitrosomonas eutropha (strain DSM 101675 / C91 / Nm57).